The primary structure comprises 246 residues: V-type proton ATPase subunit D 1 (246 aa).

This sequence belongs to the V-ATPase D subunit family. In terms of assembly, V-ATPase is a heteromultimeric enzyme made up of two complexes: the ATP-hydrolytic V1 complex and the proton translocation V0 complex. The V1 complex consists of three catalytic AB heterodimers that form a heterohexamer, three peripheral stalks each consisting of EG heterodimers, one central rotor including subunits D and F, and the regulatory subunits C and H. The proton translocation complex V0 consists of the proton transport subunit a, a ring of proteolipid subunits c9c'', rotary subunit d, subunits e and f, and the accessory subunits VhaAC45 and ATP6AP2.

Its function is as follows. Subunit of the V1 complex of vacuolar(H+)-ATPase (V-ATPase), a multisubunit enzyme composed of a peripheral complex (V1) that hydrolyzes ATP and a membrane integral complex (V0) that translocates protons. V-ATPase is responsible for acidifying and maintaining the pH of intracellular compartments and in some cell types, is targeted to the plasma membrane, where it is responsible for acidifying the extracellular environment. This Drosophila melanogaster (Fruit fly) protein is V-type proton ATPase subunit D 1 (Vha36-1).